Consider the following 377-residue polypeptide: Glutamate 5-kinase (377 aa).

Residue Lys-20 coordinates ATP. Ser-59, Asp-146, and Asn-158 together coordinate substrate. ATP is bound by residues 178-179 (SD) and 220-226 (TGGMSTK). In terms of domain architecture, PUA spans 285–363 (RGTLTVDAGA…ADIEAVLGYR (79 aa)).

The protein belongs to the glutamate 5-kinase family.

It is found in the cytoplasm. The enzyme catalyses L-glutamate + ATP = L-glutamyl 5-phosphate + ADP. Its pathway is amino-acid biosynthesis; L-proline biosynthesis; L-glutamate 5-semialdehyde from L-glutamate: step 1/2. Its function is as follows. Catalyzes the transfer of a phosphate group to glutamate to form L-glutamate 5-phosphate. The chain is Glutamate 5-kinase from Myxococcus xanthus (strain DK1622).